We begin with the raw amino-acid sequence, 477 residues long: Ribulose bisphosphate carboxylase large chain (477 aa).

A propeptide spanning residues 1-2 (MS) is cleaved from the precursor. P3 is modified (N-acetylproline). Substrate-binding residues include N123 and T173. K175 (proton acceptor) is an active-site residue. K177 is a substrate binding site. Mg(2+) is bound by residues K201, D203, and E204. K201 is modified (N6-carboxylysine). The Proton acceptor role is filled by H294. Positions 295, 327, and 379 each coordinate substrate.

Belongs to the RuBisCO large chain family. Type I subfamily. As to quaternary structure, heterohexadecamer of 8 large chains and 8 small chains; disulfide-linked. The disulfide link is formed within the large subunit homodimers. Mg(2+) is required as a cofactor. Post-translationally, the disulfide bond which can form between Cys-247 in the large chain dimeric partners within the hexadecamer appears to be associated with oxidative stress and protein turnover.

It is found in the plastid. Its subcellular location is the chloroplast. It catalyses the reaction 2 (2R)-3-phosphoglycerate + 2 H(+) = D-ribulose 1,5-bisphosphate + CO2 + H2O. The enzyme catalyses D-ribulose 1,5-bisphosphate + O2 = 2-phosphoglycolate + (2R)-3-phosphoglycerate + 2 H(+). In terms of biological role, ruBisCO catalyzes two reactions: the carboxylation of D-ribulose 1,5-bisphosphate, the primary event in carbon dioxide fixation, as well as the oxidative fragmentation of the pentose substrate in the photorespiration process. Both reactions occur simultaneously and in competition at the same active site. The protein is Ribulose bisphosphate carboxylase large chain (rbcL) of Triticum aestivum (Wheat).